Here is an 84-residue protein sequence, read N- to C-terminus: Putative antitoxin VapB37 (84 aa).

Functionally, probable antitoxin component of a type II toxin-antitoxin (TA) system. Its putative cognate toxin is VapC37. The chain is Putative antitoxin VapB37 (vapB37) from Mycobacterium tuberculosis (strain CDC 1551 / Oshkosh).